We begin with the raw amino-acid sequence, 481 residues long: Zinc finger CCCH domain-containing protein 4 (481 aa).

The segment at 157-184 (RNRAHVCSFFIRGECTRGAECPYRHEMP) adopts a C3H1-type zinc-finger fold. One can recognise an RRM domain in the interval 228-301 (KTLYVGGLNS…QRLKLTWGRP (74 aa)). A disordered region spans residues 329–481 (HNQPPPMQQY…DVSTATGSSQ (153 aa)). A compositionally biased stretch (pro residues) spans 331–345 (QPPPMQQYYMHPPPA). Composition is skewed to low complexity over residues 369–389 (AGGS…MPPH) and 399–410 (YMPSPYQQQYPP). A compositionally biased stretch (pro residues) spans 423-444 (APPPAAYPYPQQPGPGSRPAPS). The span at 449 to 471 (SAISPDSAPAGSGAPSGSSQQAP) shows a compositional bias: low complexity. The segment covering 472–481 (DVSTATGSSQ) has biased composition (polar residues).

This chain is Zinc finger CCCH domain-containing protein 4, found in Arabidopsis thaliana (Mouse-ear cress).